The sequence spans 525 residues: Arylsulfatase G (525 aa).

Positions 1 to 16 (MGWLFLKVLLAGVSFS) are cleaved as a signal peptide. Ca(2+) is bound by residues aspartate 44, aspartate 45, and cysteine 84. Catalysis depends on cysteine 84, which acts as the Nucleophile. A 3-oxoalanine (Cys) modification is found at cysteine 84. Residue asparagine 117 is glycosylated (N-linked (GlcNAc...) asparagine). Position 137 (lysine 137) interacts with substrate. Residue histidine 139 is part of the active site. Serine 162 is a binding site for substrate. Asparagine 215 carries an N-linked (GlcNAc...) asparagine glycan. Histidine 251 contacts substrate. Positions 302 and 303 each coordinate Ca(2+). N-linked (GlcNAc...) asparagine glycans are attached at residues asparagine 356 and asparagine 497.

The protein belongs to the sulfatase family. Requires Ca(2+) as cofactor. In terms of processing, N-glycosylated. N-glycosylated with both high mannose and complex type sugars. Post-translationally, the conversion to 3-oxoalanine (also known as C-formylglycine, FGly), of a serine or cysteine residue in prokaryotes and of a cysteine residue in eukaryotes, is critical for catalytic activity. The 63-kDa precursor undergoes proteolytic processing in two steps, yielding two fragments in the first step (apparent molecular masses of 44 and 18 kDa). In the second step, the 44-kDa fragment is processed further to the 34- and 10-kDa chains. The 10-kDa chain is a cleavage product of the 44-kDa fragment but linked to the 18-kDa chain through a disulfide bridge. In terms of tissue distribution, widely expressed, with very low expression in brain, lung, heart and skeletal muscle.

It is found in the lysosome. The enzyme catalyses an aryl sulfate + H2O = a phenol + sulfate + H(+). It catalyses the reaction Hydrolysis of the 3-sulfate groups of the N-sulfo-D-glucosamine 3-O-sulfate units of heparin.. With respect to regulation, inhibited by phosphate. The phosphate forms a covalent bond with the active site 3-oxoalanine. Its function is as follows. Displays arylsulfatase activity at acidic pH towards artificial substrates, such as p-nitrocatechol sulfate and also, but with a lower activity towards p-nitrophenyl sulfate and 4-methylumbelliferyl sulfate. Catalyzes the hydrolysis of the 3-sulfate groups of the N-sulfo-D-glucosamine 3-O-sulfate units of heparin. The polypeptide is Arylsulfatase G (ARSG) (Homo sapiens (Human)).